A 343-amino-acid chain; its full sequence is N-acetyl-gamma-glutamyl-phosphate reductase (343 aa).

Residue Cys-149 is part of the active site.

This sequence belongs to the NAGSA dehydrogenase family. Type 1 subfamily.

It localises to the cytoplasm. It carries out the reaction N-acetyl-L-glutamate 5-semialdehyde + phosphate + NADP(+) = N-acetyl-L-glutamyl 5-phosphate + NADPH + H(+). It functions in the pathway amino-acid biosynthesis; L-arginine biosynthesis; N(2)-acetyl-L-ornithine from L-glutamate: step 3/4. In terms of biological role, catalyzes the NADPH-dependent reduction of N-acetyl-5-glutamyl phosphate to yield N-acetyl-L-glutamate 5-semialdehyde. This chain is N-acetyl-gamma-glutamyl-phosphate reductase, found in Alkalilimnicola ehrlichii (strain ATCC BAA-1101 / DSM 17681 / MLHE-1).